The following is a 248-amino-acid chain: Inner membrane protein pE248R (248 aa).

G2 carries the N-myristoyl glycine; by host lipid modification. Residues G2–N199 lie on the Cytoplasmic side of the membrane. A helical membrane pass occupies residues I200 to F220. Residues L221–S248 lie on the Extracellular side of the membrane.

This sequence belongs to the asfivirus E248R family. Interacts with A151R.

The protein localises to the host membrane. Its subcellular location is the virion membrane. Functionally, essential for viral fusion with host endosomal membrane and core release. The chain is Inner membrane protein pE248R from Ornithodoros (relapsing fever ticks).